The primary structure comprises 620 residues: Probable potassium transport system protein Kup 2 (620 aa).

A run of 12 helical transmembrane segments spans residues 10-30 (LLVS…LYAL), 50-70 (VLSL…VIVI), 102-122 (MMLG…TPAI), 136-156 (PDLR…LFAI), 168-188 (FGPV…VNVI), 211-231 (LMSF…EALY), 246-266 (WFCL…ALLI), 284-304 (MVVP…QAVI), 336-356 (IYVP…VVGF), 368-388 (IAVT…MALL), 393-413 (MALV…FFSA), and 415-435 (IIKV…SFTV).

It belongs to the HAK/KUP transporter (TC 2.A.72) family.

The protein localises to the cell inner membrane. It carries out the reaction K(+)(in) + H(+)(in) = K(+)(out) + H(+)(out). Its function is as follows. Transport of potassium into the cell. Likely operates as a K(+):H(+) symporter. This Rhodopseudomonas palustris (strain BisB5) protein is Probable potassium transport system protein Kup 2.